We begin with the raw amino-acid sequence, 843 residues long: MATKKAGSRLETEIERCRSECQWERIPELVKQLSAKLIANDDMAELLLGESKLEQYLKEHPLRQGASPRGPKPQLTEVRKHLTAALDRGNLKSEFLQESNLIMAKLNYVEGDYKEALNIYARVGLDDLPLTAVPPYRLRVIAEAYATKGLCLEKLPISSSTSNLHVDREQDVITCYEKAGDIALLYLQEIERVILSNIQNRSPKPGPAPHDQELGFFLETGLQRAHVLYFKNGNLTRGVGRFRELLRAVETRTTQNLRMTIARQLAEILLRGMCEQSYWNPLEDPPCQSPLDDPLRKGANTKTYTLTRRARVYSGENIFCPQENTEEALLLLLISESMANRDAVLSRIPEHKSDRLISLQSASVVYDLLTIALGRRGQYEMLSECLERAMKFAFEEFHLWYQFALSLMAAGKSARAVKVLKECIRLKPDDATIPLLAAKLCMGSLHWLEEAEKFAKTVVDVGEKTSEFKAKGYLALGLTYSLQATDASLRGMQEVLQRKALLAFQRAHSLSPTDHQAAFYLALQLAISRQIPEALGYVRQALQLQGDDANSLHLLALLLSAQKHYHDALNIIDMALSEYPENFILLFSKVKLQSLCRGPDEALLTCKHMLQIWKSCYNLTNPSDSGRGSSLLDRTIADRRQLNTITLPDFSDPETGSVHATSVAASRVEQALSEVASSLQSSAPKQGPLHPWMTLAQIWLHAAEVYIGIGKPAEATACTQEAANLFPMSHNVLYMRGQIAELRGSMDEARRWYEEALAISPTHVKSMQRLALILHQLGRYSLAEKILRDAVQVNSTAHEVWNGLGEVLQAQGNDAAATECFLTALELEASSPAVPFTIIPRVL.

A TPR 1 repeat occupies 97–131 (QESNLIMAKLNYVEGDYKEALNIYARVGLDDLPLT). A phosphoserine mark is found at serine 160 and serine 202. TPR repeat units follow at residues 219 to 252 (ETGL…VETR), 363 to 396 (SVVY…AFEE), 397 to 430 (FHLW…KPDD), 479 to 514 (TYSL…SPTD), 516 to 548 (QAAF…QGDD), and 549 to 582 (ANSL…YPEN). Serine 625, serine 629, serine 630, serine 673, serine 677, serine 678, and serine 681 each carry phosphoserine. TPR repeat units follow at residues 696–729 (AQIW…FPMS), 730–763 (HNVL…SPTH), 765–797 (KSMQ…NSTA), and 798–831 (HEVW…EASS).

As to quaternary structure, component of a phosphatidylinositol 4-kinase (PI4K) complex, composed of PI4KA, EFR3 (EFR3A or EFR3B), TTC7 (TTC7A or TTC7B) and HYCC (HYCC1 or HYCC2). Interacts with PI4KA, interaction is direct. Interacts with EFR3 (EFR3A or EFR3B), interaction is direct. Interacts with HYCC (HYCC1 or HYCC2), interaction is direct. Association with the PI4K complex is strongly reduced by TMEM150A.

It localises to the cytoplasm. Its subcellular location is the cytosol. The protein localises to the cell membrane. Component of a complex required to localize phosphatidylinositol 4-kinase (PI4K) to the plasma membrane. The complex acts as a regulator of phosphatidylinositol 4-phosphate (PtdIns(4)P) synthesis. In the complex, plays a central role in bridging PI4KA to EFR3B and HYCC1, via direct interactions. The sequence is that of Tetratricopeptide repeat protein 7B (TTC7B) from Homo sapiens (Human).